Consider the following 957-residue polypeptide: Ribonuclease 3-like protein 3 (957 aa).

One can recognise an RNase III 1 domain in the interval 4 to 142; it reads VEAVEKILNY…IAATVFIDVN (139 aa). The region spanning 307–382 is the DRBM 1 domain; it reads NGRGELIEIC…AYHMIRALES (76 aa). The 137-residue stretch at 415-551 folds into the RNase III 2 domain; sequence VEAVEKILNY…VAGAVYIDVK (137 aa). 2 DRBM domains span residues 566-645 and 837-912; these read EPIY…KLSE and DEKG…ALES.

Its function is as follows. Ribonuclease that cleaves double-stranded RNA (dsRNA). In Arabidopsis thaliana (Mouse-ear cress), this protein is Ribonuclease 3-like protein 3 (RTL3).